A 242-amino-acid polypeptide reads, in one-letter code: Acetoacetyl-CoA reductase (242 aa).

NADP(+)-binding positions include 12–14 (RGI) and 82–86 (NAGIT). Residues Asp-88 and 141-144 (QAGQ) contribute to the substrate site. The active-site Proton acceptor is Tyr-147. 177 to 180 (PGYI) contacts NADP(+). 178–179 (GY) provides a ligand contact to substrate.

Belongs to the short-chain dehydrogenases/reductases (SDR) family.

The protein resides in the cytoplasm. It carries out the reaction a (3R)-3-hydroxyacyl-CoA + NADP(+) = a 3-oxoacyl-CoA + NADPH + H(+). The protein operates within biopolymer metabolism; poly-(R)-3-hydroxybutanoate biosynthesis. The chain is Acetoacetyl-CoA reductase (phaB) from Paracoccus denitrificans.